Here is a 473-residue protein sequence, read N- to C-terminus: MTRPVVTRFAPSPTGFLHIGGGRTALFNWLYARKLGGKMLLRIEDTDRQRSTQPAIDAILDGLKWLGIEWDGDTVYQFARAARHREVAEQLLAAGKAYRCYATAEELTAMRDKARAEGRSKLYDGSWRDRDPSEAPADMKPTIRLKAPLDGETVIEDQVQGRVVWQNENLDDLVLLRGDGTPTYMLAVVVDDHDMDVTHVIRGDDHLINAARQKQIYDAMGWELPVMAHIPLIHGPDGSKLSKRHGALGVDAYRAMGYLPAALRNYLVRLGWSHGDQEIFTTQEMIDAFDLAAIGRSAARFDFAKLESLNGHYIRQSDDQSLVTLLEDLLHYVPQGPAIAARLTDTTRAQLVQAMPGLKERAKTLLELLDNAGFIFADRPLAIDAKGQAVLTPDIRALIGRLRTALEDVSPWTAATTEAAMRTFAEQAGLKLGAVAQPLRVALTGRTTSPGIFDVLAVLGREECLSRLADQAA.

The 'HIGH' region signature appears at 11–21 (PSPTGFLHIGG). The short motif at 240 to 244 (KLSKR) is the 'KMSKS' region element. Lys-243 is an ATP binding site.

It belongs to the class-I aminoacyl-tRNA synthetase family. Glutamate--tRNA ligase type 1 subfamily. In terms of assembly, monomer.

It is found in the cytoplasm. The catalysed reaction is tRNA(Glu) + L-glutamate + ATP = L-glutamyl-tRNA(Glu) + AMP + diphosphate. Catalyzes the attachment of glutamate to tRNA(Glu) in a two-step reaction: glutamate is first activated by ATP to form Glu-AMP and then transferred to the acceptor end of tRNA(Glu). The polypeptide is Glutamate--tRNA ligase (Rhodopseudomonas palustris (strain HaA2)).